Consider the following 357-residue polypeptide: tRNA-specific 2-thiouridylase MnmA (357 aa).

ATP contacts are provided by residues 8–15 (GISGGVDS) and I34. The active-site Nucleophile is C96. A disulfide bond links C96 and C192. G120 provides a ligand contact to ATP. Residues 142–144 (KDQ) are interaction with tRNA. The active-site Cysteine persulfide intermediate is C192. The interval 301-302 (RY) is interaction with tRNA.

This sequence belongs to the MnmA/TRMU family.

The protein localises to the cytoplasm. It catalyses the reaction S-sulfanyl-L-cysteinyl-[protein] + uridine(34) in tRNA + AH2 + ATP = 2-thiouridine(34) in tRNA + L-cysteinyl-[protein] + A + AMP + diphosphate + H(+). Functionally, catalyzes the 2-thiolation of uridine at the wobble position (U34) of tRNA, leading to the formation of s(2)U34. This Chlorobium phaeobacteroides (strain DSM 266 / SMG 266 / 2430) protein is tRNA-specific 2-thiouridylase MnmA.